The primary structure comprises 295 residues: MEVLDKAVNGYIDHLLGPKDPRVKGWLLLDNYVPTIFFTALYLFIVWRGPKYMQNRQPVSCRSILVVYNLGLTLLSFYMFYELVTGVWEGGYNFFCQDTHSGGDADTKIIRVLWWYYFSKLIEFMDTFFFILRKNNHQITVLHVYHHASMLNIWWFVMNWVPCGHSFFGATLNSFIHVLMYSYYGLSAIPAIRPYLWWKKYITQCQLTQFVLTMTQTTCAMIWPCKFPMGWLYFQNSYMISLIILFTNFYLKTYNKKTSSRRKEYQNGSASAVNGYTNSFSSLEDNVKQRKQRQN.

7 consecutive transmembrane segments (helical) span residues 26–46, 64–84, 112–132, 150–170, 172–192, 207–223, and 227–247; these read WLLL…LFIV, ILVV…YELV, VLWW…FFIL, MLNI…FFGA, LNSF…IPAI, LTQF…AMIW, and FPMG…ILFT. Positions 265–295 are disordered; it reads YQNGSASAVNGYTNSFSSLEDNVKQRKQRQN. Over residues 266 to 284 the composition is skewed to polar residues; the sequence is QNGSASAVNGYTNSFSSLE.

The protein belongs to the ELO family. ELOVL5 subfamily.

The protein localises to the endoplasmic reticulum membrane. It localises to the cell projection. It is found in the dendrite. It catalyses the reaction a very-long-chain acyl-CoA + malonyl-CoA + H(+) = a very-long-chain 3-oxoacyl-CoA + CO2 + CoA. It carries out the reaction (6Z,9Z,12Z)-octadecatrienoyl-CoA + malonyl-CoA + H(+) = (8Z,11Z,14Z)-3-oxoeicosatrienoyl-CoA + CO2 + CoA. The catalysed reaction is (9Z,12Z,15Z)-octadecatrienoyl-CoA + malonyl-CoA + H(+) = (11Z,14Z,17Z)-3-oxoeicosatrienoyl-CoA + CO2 + CoA. The enzyme catalyses (9Z)-hexadecenoyl-CoA + malonyl-CoA + H(+) = 3-oxo-(11Z)-octadecenoyl-CoA + CO2 + CoA. It catalyses the reaction (9Z)-octadecenoyl-CoA + malonyl-CoA + H(+) = 3-oxo-(11Z)-eicosenoyl-CoA + CO2 + CoA. It carries out the reaction (11Z)-octadecenoyl-CoA + malonyl-CoA + H(+) = 3-oxo-(13Z)-eicosenoyl-CoA + CO2 + CoA. The catalysed reaction is (9Z,12Z)-octadecadienoyl-CoA + malonyl-CoA + H(+) = (11Z,14Z)-3-oxoicosa-11,14-dienoyl-CoA + CO2 + CoA. The enzyme catalyses (6Z,9Z,12Z,15Z)-octadecatetraenoyl-CoA + malonyl-CoA + H(+) = (8Z,11Z,14Z,17Z)-3-oxoicosatetraenoyl-CoA + CO2 + CoA. It catalyses the reaction (5Z,8Z,11Z,14Z)-eicosatetraenoyl-CoA + malonyl-CoA + H(+) = (7Z,10Z,13Z,16Z)-3-oxodocosatetraenoyl-CoA + CO2 + CoA. It carries out the reaction (5Z,8Z,11Z,14Z,17Z)-eicosapentaenoyl-CoA + malonyl-CoA + H(+) = 3-oxo-(7Z,10Z,13Z,16Z,19Z)-docosapentaenoyl-CoA + CO2 + CoA. Its pathway is lipid metabolism; polyunsaturated fatty acid biosynthesis. Catalyzes the first and rate-limiting reaction of the four reactions that constitute the long-chain fatty acids elongation cycle. This endoplasmic reticulum-bound enzymatic process allows the addition of 2 carbons to the chain of long- and very long-chain fatty acids (VLCFAs) per cycle. Condensing enzyme that acts specifically toward polyunsaturated acyl-CoA with the higher activity toward C18:3(n-6) acyl-CoA. May participate in the production of monounsaturated and of polyunsaturated VLCFAs of different chain lengths that are involved in multiple biological processes as precursors of membrane lipids and lipid mediators. In conditions where the essential linoleic and alpha linoleic fatty acids are lacking it is also involved in the synthesis of Mead acid from oleic acid. The sequence is that of Very long chain fatty acid elongase 5 from Xenopus laevis (African clawed frog).